We begin with the raw amino-acid sequence, 199 residues long: MEISMDLIKKLREMTGAGILDCKKALEEANGDMEKAVEILRKKGAATAEKKAGRTTKEGIIVAYVHFNGRIGVLLEMNCETDFVARTDEFKELAYNLAKQVAAMKPLYVRREDVPAEVIEKEKEIYRAQIKDKPENIVEKIVEGKLEKFFEQACLYEQTYIFDDTKKVKDLINELIAKTGENIRVSRFTRYEIGEGYED.

Residues 81–84 are involved in Mg(2+) ion dislocation from EF-Tu; it reads TDFV.

It belongs to the EF-Ts family.

The protein resides in the cytoplasm. Functionally, associates with the EF-Tu.GDP complex and induces the exchange of GDP to GTP. It remains bound to the aminoacyl-tRNA.EF-Tu.GTP complex up to the GTP hydrolysis stage on the ribosome. The polypeptide is Elongation factor Ts (Thermotoga sp. (strain RQ2)).